Reading from the N-terminus, the 99-residue chain is Integration host factor subunit alpha (99 aa).

This sequence belongs to the bacterial histone-like protein family. In terms of assembly, heterodimer of an alpha and a beta chain.

This protein is one of the two subunits of integration host factor, a specific DNA-binding protein that functions in genetic recombination as well as in transcriptional and translational control. In Pseudoalteromonas translucida (strain TAC 125), this protein is Integration host factor subunit alpha.